Consider the following 91-residue polypeptide: Tityustoxin-19 (91 aa).

Positions 1–25 are cleaved as a signal peptide; it reads MVATNRCCVFALLFALLLVHSLTEA. In terms of domain architecture, BetaSPN-type CS-alpha/beta spans 58–91; sequence EYACPAIDKFCEDHCAAKKAVGKCDDFKCNCIKL. Disulfide bonds link cysteine 61/cysteine 81, cysteine 68/cysteine 86, and cysteine 72/cysteine 88.

This sequence belongs to the long chain scorpion toxin family. Class 2 subfamily. As to expression, expressed by the venom gland.

It localises to the secreted. Functionally, may function as a voltage-gated potassium channel blocker and may have cytolytic activity. Is often not detected in the tested venom fractions, suggesting that the toxin is likely subject to frequent processing within the venom. In terms of biological role, specific and reversible blocker of the potassium channel Kv1.2/KCNA2 (IC(50)=544 nM). Its function is as follows. Shows cytolytic effects on erythrocytes and induces non-selective pore formation when high concentrations (300 nM) are applied on oocytes. Does not cause hemolysis, mast cell degranulation, LDH release, and does not have antimicrobial activity. Does not cause edema and pain. This Tityus serrulatus (Brazilian scorpion) protein is Tityustoxin-19.